Consider the following 257-residue polypeptide: Chlorocatechol 1,2-dioxygenase (257 aa).

Fe cation is bound by residues tyrosine 134, tyrosine 169, histidine 194, and histidine 196.

It belongs to the intradiol ring-cleavage dioxygenase family. Fe(3+) is required as a cofactor.

It catalyses the reaction 4-chlorocatechol + O2 = 3-chloro-cis,cis-muconate + 2 H(+). The enzyme catalyses 3,5-dichlorocatechol + O2 = (2E,4E)-2,4-dichloromuconate + 2 H(+). This Rhodococcus opacus (Nocardia opaca) protein is Chlorocatechol 1,2-dioxygenase (clcA).